The primary structure comprises 458 residues: Methionine aminopeptidase 2-2 (458 aa).

Over residues 1-14 (MGSKTPERDGHKGQ) the composition is skewed to basic and acidic residues. The disordered stretch occupies residues 1–93 (MGSKTPERDG…QSSPPRVPLS (93 aa)). Positions 67-82 (QKKKRKSKKKGKKKAA) are enriched in basic residues. His-209 contacts substrate. Asp-230, Asp-241, and His-310 together coordinate a divalent metal cation. A substrate-binding site is contributed by His-318. A divalent metal cation contacts are provided by Glu-343 and Glu-439.

The protein belongs to the peptidase M24A family. Methionine aminopeptidase eukaryotic type 2 subfamily. Co(2+) is required as a cofactor. The cofactor is Zn(2+). Requires Mn(2+) as cofactor. It depends on Fe(2+) as a cofactor.

Its subcellular location is the cytoplasm. It carries out the reaction Release of N-terminal amino acids, preferentially methionine, from peptides and arylamides.. Cotranslationally removes the N-terminal methionine from nascent proteins. The N-terminal methionine is often cleaved when the second residue in the primary sequence is small and uncharged (Met-Ala-, Cys, Gly, Pro, Ser, Thr, or Val). This Emericella nidulans (strain FGSC A4 / ATCC 38163 / CBS 112.46 / NRRL 194 / M139) (Aspergillus nidulans) protein is Methionine aminopeptidase 2-2.